The sequence spans 505 residues: MMLDLTNAKRIGIIGGGIVGWLAAIALRRVFDVDVDVTVIEAPTVFPLGPGEGGSLNLIDTLCRNELDLDVFIGEAGATHKLGVLYENWRGGGIPDRYYRMFGGSGIPEIECRVGGFFPLLSARIAAGENLHTCIPGFELITKKASQVEIDELLATGESGLYPSFHFNHAGFERYLRRVGLARGITSRRAVVHGMRLDDRGHVNAFQLGGEELEVDFAVDASGFARLGLGKVFNTRWCSFANVLPTDRAIIFELEPRGSSPVTRATAMKAGWMWEAPLNRSISAGYAFSSRYADAAMAIAEVENHYGFRVEAKHELSLDQGYFSTAWVNNFVALGTASGFVEPLEAALAAHTFEALRNLERILANGSGIVPARAIEGYNSANARCWTGVRDFLRLHYDSKRIDTPFWRDLAAAELPEGYANLRACFQKRTPRFIDIQPYVGSGWQSLFHEIDWISVAVPLGVVPQAAACAELRRLSTESRSEVQAYVDRLKGTIAKISSTRGYMH.

A helical membrane pass occupies residues 11-27 (IGIIGGGIVGWLAAIAL).

It localises to the membrane. This is an uncharacterized protein from Sinorhizobium fredii (strain NBRC 101917 / NGR234).